We begin with the raw amino-acid sequence, 411 residues long: Arginine biosynthesis bifunctional protein ArgJ (411 aa).

Residues threonine 160, lysine 186, threonine 197, glutamate 283, asparagine 406, and threonine 411 each contribute to the substrate site. Threonine 197 acts as the Nucleophile in catalysis.

Belongs to the ArgJ family. Heterotetramer of two alpha and two beta chains.

It is found in the cytoplasm. The enzyme catalyses N(2)-acetyl-L-ornithine + L-glutamate = N-acetyl-L-glutamate + L-ornithine. It catalyses the reaction L-glutamate + acetyl-CoA = N-acetyl-L-glutamate + CoA + H(+). It functions in the pathway amino-acid biosynthesis; L-arginine biosynthesis; L-ornithine and N-acetyl-L-glutamate from L-glutamate and N(2)-acetyl-L-ornithine (cyclic): step 1/1. Its pathway is amino-acid biosynthesis; L-arginine biosynthesis; N(2)-acetyl-L-ornithine from L-glutamate: step 1/4. With respect to regulation, feedback inhibition by L-ornithine. In terms of biological role, catalyzes two activities which are involved in the cyclic version of arginine biosynthesis: the synthesis of N-acetylglutamate from glutamate and acetyl-CoA as the acetyl donor, and of ornithine by transacetylation between N(2)-acetylornithine and glutamate. This Halalkalibacterium halodurans (strain ATCC BAA-125 / DSM 18197 / FERM 7344 / JCM 9153 / C-125) (Bacillus halodurans) protein is Arginine biosynthesis bifunctional protein ArgJ.